Consider the following 204-residue polypeptide: MTSQPLRVGIGGPVGSGKTALTLALCRELRERYNLAVVTNDIYTQEDAQFLVRNEALAPERIIGVETGGCPHTAIREDASINLEAVDQLNRRFPGLELILVESGGDNLSATFSPELSDLTLYVIDVSAGDKIPRKGGPGICKSDLLVINKIDLAPLVGASLEVMDEDARRMRGDKPFVFSNQKTGQGLAEIIAFIERQGLLTAA.

A GTP-binding site is contributed by 12–19; it reads GPVGSGKT.

It belongs to the SIMIBI class G3E GTPase family. UreG subfamily. As to quaternary structure, homodimer. UreD, UreF and UreG form a complex that acts as a GTP-hydrolysis-dependent molecular chaperone, activating the urease apoprotein by helping to assemble the nickel containing metallocenter of UreC. The UreE protein probably delivers the nickel.

It localises to the cytoplasm. Functionally, facilitates the functional incorporation of the urease nickel metallocenter. This process requires GTP hydrolysis, probably effectuated by UreG. This chain is Urease accessory protein UreG, found in Pseudomonas paraeruginosa (strain DSM 24068 / PA7) (Pseudomonas aeruginosa (strain PA7)).